The sequence spans 335 residues: Ferrochelatase (335 aa).

Fe cation-binding residues include histidine 194 and glutamate 275.

It belongs to the ferrochelatase family.

The protein localises to the cytoplasm. It catalyses the reaction heme b + 2 H(+) = protoporphyrin IX + Fe(2+). Its pathway is porphyrin-containing compound metabolism; protoheme biosynthesis; protoheme from protoporphyrin-IX: step 1/1. In terms of biological role, catalyzes the ferrous insertion into protoporphyrin IX. This chain is Ferrochelatase, found in Sodalis glossinidius (strain morsitans).